We begin with the raw amino-acid sequence, 158 residues long: Mitotic-spindle organizing protein 2A (158 aa).

The residue at position 34 (S34) is a Phosphoserine. A disordered region spans residues 84–158 (RLASEPQDPA…PGKSPTQGST (75 aa)). The span at 112–122 (SAALGGVLALA) shows a compositional bias: low complexity. Residues 128–140 (EGSSQRMPRQPSA) are compositionally biased toward polar residues. At S152 the chain carries Phosphoserine.

The protein belongs to the MOZART2 family. Associates with the gamma-tubulin ring complex (gTuRC) consisting of TUBGCP2, TUBGCP3, TUBGCP4, TUBGCP5 and TUBGCP6 and gamma-tubulin TUBG1 or TUBG2; within the complex, interacts with TUBGCP2; the interaction plays a role in gTuRC activation.

It is found in the cytoplasm. Its subcellular location is the cytoskeleton. The protein resides in the microtubule organizing center. The protein localises to the centrosome. It localises to the spindle. Required for the recruitment and the assembly of the gamma-tubulin ring complex (gTuRC) at the centrosome. The gTuRC regulates the minus-end nucleation of alpha-beta tubulin heterodimers that grow into microtubule protafilaments, a critical step in centrosome duplication and spindle formation. This Homo sapiens (Human) protein is Mitotic-spindle organizing protein 2A (MZT2A).